We begin with the raw amino-acid sequence, 369 residues long: Glutamate 5-kinase (369 aa).

Lys-9 lines the ATP pocket. Ser-49, Asp-136, and Asn-148 together coordinate substrate. Residues 168–169 and 210–216 each bind ATP; these read TD and TGGMLTK. Residues 275-355 form the PUA domain; the sequence is QGSIWVDKGA…KGVLIYRDDW (81 aa).

Belongs to the glutamate 5-kinase family.

Its subcellular location is the cytoplasm. The enzyme catalyses L-glutamate + ATP = L-glutamyl 5-phosphate + ADP. Its pathway is amino-acid biosynthesis; L-proline biosynthesis; L-glutamate 5-semialdehyde from L-glutamate: step 1/2. In terms of biological role, catalyzes the transfer of a phosphate group to glutamate to form L-glutamate 5-phosphate. This is Glutamate 5-kinase from Streptococcus pneumoniae serotype 4 (strain ATCC BAA-334 / TIGR4).